The following is a 321-amino-acid chain: uncharacterized protein (321 aa).

This sequence belongs to the NAD(P)-dependent epimerase/dehydratase family.

This is an uncharacterized protein from Staphylococcus aureus (strain bovine RF122 / ET3-1).